A 30-amino-acid chain; its full sequence is Root cyclotide 1 (30 aa).

Positions 1 to 30 (GIPCAESCVWIPCTVTALLGCSCSNKVCYN) form a cross-link, cyclopeptide (Gly-Asn). 3 disulfide bridges follow: Cys4/Cys21, Cys8/Cys23, and Cys13/Cys28.

In terms of processing, this is a cyclic peptide. As to expression, expressed in roots.

In terms of biological role, probably participates in a plant defense mechanism. The chain is Root cyclotide 1 from Viola hederacea (Australian violet).